The sequence spans 518 residues: Probable cytochrome P450 9h1 (518 aa).

C462 serves as a coordination point for heme.

Belongs to the cytochrome P450 family. It depends on heme as a cofactor.

Its subcellular location is the endoplasmic reticulum membrane. It is found in the microsome membrane. May be involved in the metabolism of insect hormones and in the breakdown of synthetic insecticides. The polypeptide is Probable cytochrome P450 9h1 (Cyp9h1) (Drosophila melanogaster (Fruit fly)).